Reading from the N-terminus, the 96-residue chain is MKSPYDIILKPIISEDSMEKMEDKKYVFKVDKNANKIEIRNAIEKIFDVKVKSVNTMNVKGKVKRMGAHSGKRSDWKKAIVALTEDSKEIEFFEGM.

Belongs to the universal ribosomal protein uL23 family. In terms of assembly, part of the 50S ribosomal subunit. Contacts protein L29, and trigger factor when it is bound to the ribosome.

Functionally, one of the early assembly proteins it binds 23S rRNA. One of the proteins that surrounds the polypeptide exit tunnel on the outside of the ribosome. Forms the main docking site for trigger factor binding to the ribosome. The chain is Large ribosomal subunit protein uL23 from Finegoldia magna (strain ATCC 29328 / DSM 20472 / WAL 2508) (Peptostreptococcus magnus).